Here is a 442-residue protein sequence, read N- to C-terminus: Proline--tRNA ligase (442 aa).

Belongs to the class-II aminoacyl-tRNA synthetase family. ProS type 2 subfamily. Homodimer.

It is found in the cytoplasm. It carries out the reaction tRNA(Pro) + L-proline + ATP = L-prolyl-tRNA(Pro) + AMP + diphosphate. In terms of biological role, catalyzes the attachment of proline to tRNA(Pro) in a two-step reaction: proline is first activated by ATP to form Pro-AMP and then transferred to the acceptor end of tRNA(Pro). The sequence is that of Proline--tRNA ligase from Brucella canis (strain ATCC 23365 / NCTC 10854 / RM-666).